We begin with the raw amino-acid sequence, 327 residues long: HMRNHLGSKPFQCSQCSYSCVNKSMLNSHLKSHSNVYQYRCADCNYATKYCHSLKLHLRKYQHNPAMVLNLDGTPNPLPIIDVYGTRRGPKQKPFSKMFEPQGPVSNNNQPQPPAPTHPIFGNHFPVNLPYLPPLLPHSFLFPPNNNYEQRTSPKNHEIQTEKPQQMSPPASILHQRLSYTERPLESGSTSPPPKSPPSITQTPTHREMPTEHGDDALDLTNAKTSEAGTPPPPTERATPVTPTTALKNRRKGRAFKLQPAALRLQHEDEKMRDADGSDSESDASAEVASSSAASSYTCQFCDITFGDLTMHTIHMGFHGYNDPFMC.

3 C2H2-type zinc fingers span residues 1–5 (HMRNH), 11–33 (FQCS…LKSH), and 39–63 (YRCA…KYQH). Disordered regions lie at residues 91–121 (KQKP…HPIF), 143–170 (PPNN…MSPP), and 182–290 (ERPL…EVAS). Composition is skewed to basic and acidic residues over residues 205 to 216 (THREMPTEHGDD) and 265 to 276 (LQHEDEKMRDAD). C2H2-type zinc fingers lie at residues 297 to 319 (YTCQ…MGFH) and 325 to 327 (FMC).

This sequence belongs to the hunchback C2H2-type zinc-finger protein family.

The protein resides in the nucleus. Its function is as follows. Gap class segmentation protein that controls development of head structures. The chain is Protein hunchback (hb) from Manduca sexta (Tobacco hawkmoth).